A 933-amino-acid chain; its full sequence is Serine/threonine-protein kinase PknD (933 aa).

Residues 4-291 enclose the Protein kinase domain; that stretch reads YDIIRMIGKG…ELKDDIEQHL (288 aa). Residues 10–18 and Lys33 contribute to the ATP site; that span reads IGKGGMGEV. Catalysis depends on Asp138, which acts as the Proton acceptor.

Belongs to the protein kinase superfamily. Ser/Thr protein kinase family. Post-translationally, autophosphorylated on serine and threonine residues.

It carries out the reaction L-seryl-[protein] + ATP = O-phospho-L-seryl-[protein] + ADP + H(+). The enzyme catalyses L-threonyl-[protein] + ATP = O-phospho-L-threonyl-[protein] + ADP + H(+). Functionally, together with the serine/threonine kinase Pkn1, may play a role in the specific interactions with host proteins during intracellular growth. This is Serine/threonine-protein kinase PknD from Chlamydia felis (strain Fe/C-56) (Chlamydophila felis).